Consider the following 305-residue polypeptide: ATP synthase gamma chain (305 aa).

The protein belongs to the ATPase gamma chain family. In terms of assembly, F-type ATPases have 2 components, CF(1) - the catalytic core - and CF(0) - the membrane proton channel. CF(1) has five subunits: alpha(3), beta(3), gamma(1), delta(1), epsilon(1). CF(0) has three main subunits: a, b and c.

It localises to the cell membrane. Functionally, produces ATP from ADP in the presence of a proton gradient across the membrane. The gamma chain is believed to be important in regulating ATPase activity and the flow of protons through the CF(0) complex. The protein is ATP synthase gamma chain of Streptomyces coelicolor (strain ATCC BAA-471 / A3(2) / M145).